A 167-amino-acid chain; its full sequence is Multifunctional Ser/Thr-tRNA deacylase ProXp-y (167 aa).

It localises to the cytoplasm. The catalysed reaction is L-seryl-tRNA(Lys) + H2O = tRNA(Lys) + L-serine. It catalyses the reaction L-threonyl-tRNA(Lys) + H2O = tRNA(Lys) + L-threonine. The enzyme catalyses L-homoseryl-tRNA(Lys) + H2O = tRNA(Lys) + L-homoserine + H(+). It carries out the reaction L-seryl-tRNA(Ala) + H2O = tRNA(Ala) + L-serine. The catalysed reaction is L-homoseryl-tRNA(Ser) + H2O = tRNA(Ser) + L-homoserine + H(+). It catalyses the reaction L-seryl-tRNA(Thr) + H2O = tRNA(Thr) + L-serine. The enzyme catalyses L-threonyl-tRNA(Ile) + H2O = tRNA(Ile) + L-threonine. It carries out the reaction L-threonyl-tRNA(Val) + H2O = tRNA(Val) + L-threonine. The catalysed reaction is L-threonyl-tRNA(Ser) + H2O = tRNA(Ser) + L-threonine. In terms of biological role, an aminoacyl-tRNA editing enzyme that deacylates Ser-tRNA and/or Thr-tRNA mischarged by lysyl-tRNA synthetase (LysRS), threonyl-tRNA synthetase (ThrRS), seryl-tRNA synthetase (SerRS), alanyl-tRNA synthetase (AlaRS), valyl-tRNA synthetase (ValRS) and isoleucyl-tRNA synthetase (IleRS) in vitro. Also deacylates mischarged Hse-tRNA(Lys) and Hse-tRNA(Ser), and cognate Ser-tRNA(Ser) and Thr-tRNA(Thr) in vitro. The presence of cognate ThrRS abolishes the Thr-tRNA(Thr) deacylase activity, hence this activity is not applicable physiologically. Not able to remove the amino acid moiety from cognate Val-tRNA(Val), Ile-tRNA(Ile), Lys-tRNA(Lys), Ala-tRNA(Ala) or Pro-tRNA(Pro), or from incorrectly charged Ala-tRNA(Pro), Cys-tRNA(Pro) or Leu-tRNA(Pro) in vitro. May be required in vivo to prevent mistranslation and to maintain growth when the error prone stress-inducible lysyl-tRNA synthetase (LysU) is expressed under environmental pressure. The protein is Multifunctional Ser/Thr-tRNA deacylase ProXp-y of Escherichia coli O157:H7.